The primary structure comprises 71 residues: Lysis protein (71 aa).

The disordered stretch occupies residues 1-24; the sequence is MQQPSQPTRESTKKPVPFQHEEYP. Residues 34 to 56 traverse the membrane as a helical segment; that stretch reads LYVLICLAIFLSKFTNQLLASLL.

Belongs to the Leviviricetes lysis protein family.

It is found in the host cell inner membrane. The protein localises to the host cell outer membrane. Induces the formation of specific membrane adhesion sites between the inner and outer membranes, apparently leading to host cell lysis. Lysis may be performed via activation of host murein hydrolases. The sequence is that of Lysis protein from Enterobacteria phage fr (Bacteriophage fr).